The following is a 157-amino-acid chain: Putative glutathione-dependent formaldehyde-activating enzyme (157 aa).

Residues 3–134 form the CENP-V/GFA domain; the sequence is LEGSCHCGAV…WVEIESREQD (132 aa). 7 residues coordinate Zn(2+): C7, C9, C27, C29, C32, C79, and C82.

The protein belongs to the Gfa family. It depends on Zn(2+) as a cofactor.

It carries out the reaction S-(hydroxymethyl)glutathione = glutathione + formaldehyde. It participates in one-carbon metabolism; formaldehyde degradation; formate from formaldehyde (glutathione route): step 1/3. In terms of biological role, catalyzes the condensation of formaldehyde and glutathione to S-hydroxymethylglutathione. The sequence is that of Putative glutathione-dependent formaldehyde-activating enzyme from Halomonas elongata (strain ATCC 33173 / DSM 2581 / NBRC 15536 / NCIMB 2198 / 1H9).